Consider the following 99-residue polypeptide: Aspartyl/glutamyl-tRNA(Asn/Gln) amidotransferase subunit C (99 aa).

Belongs to the GatC family. Heterotrimer of A, B and C subunits.

The enzyme catalyses L-glutamyl-tRNA(Gln) + L-glutamine + ATP + H2O = L-glutaminyl-tRNA(Gln) + L-glutamate + ADP + phosphate + H(+). It catalyses the reaction L-aspartyl-tRNA(Asn) + L-glutamine + ATP + H2O = L-asparaginyl-tRNA(Asn) + L-glutamate + ADP + phosphate + 2 H(+). Its function is as follows. Allows the formation of correctly charged Asn-tRNA(Asn) or Gln-tRNA(Gln) through the transamidation of misacylated Asp-tRNA(Asn) or Glu-tRNA(Gln) in organisms which lack either or both of asparaginyl-tRNA or glutaminyl-tRNA synthetases. The reaction takes place in the presence of glutamine and ATP through an activated phospho-Asp-tRNA(Asn) or phospho-Glu-tRNA(Gln). The chain is Aspartyl/glutamyl-tRNA(Asn/Gln) amidotransferase subunit C from Sulfurihydrogenibium sp. (strain YO3AOP1).